Consider the following 160-residue polypeptide: S-ribosylhomocysteine lyase (160 aa).

Positions 57, 61, and 127 each coordinate Fe cation.

This sequence belongs to the LuxS family. Homodimer. Fe cation serves as cofactor.

It carries out the reaction S-(5-deoxy-D-ribos-5-yl)-L-homocysteine = (S)-4,5-dihydroxypentane-2,3-dione + L-homocysteine. Its function is as follows. Involved in the synthesis of autoinducer 2 (AI-2) which is secreted by bacteria and is used to communicate both the cell density and the metabolic potential of the environment. The regulation of gene expression in response to changes in cell density is called quorum sensing. Catalyzes the transformation of S-ribosylhomocysteine (RHC) to homocysteine (HC) and 4,5-dihydroxy-2,3-pentadione (DPD). The sequence is that of S-ribosylhomocysteine lyase from Streptococcus thermophilus (strain CNRZ 1066).